A 157-amino-acid polypeptide reads, in one-letter code: Ribosomal RNA large subunit methyltransferase H (157 aa).

S-adenosyl-L-methionine-binding positions include Gly-104 and 123–128; that span reads LSSLTL.

This sequence belongs to the RNA methyltransferase RlmH family. In terms of assembly, homodimer.

It is found in the cytoplasm. The enzyme catalyses pseudouridine(1915) in 23S rRNA + S-adenosyl-L-methionine = N(3)-methylpseudouridine(1915) in 23S rRNA + S-adenosyl-L-homocysteine + H(+). Its function is as follows. Specifically methylates the pseudouridine at position 1915 (m3Psi1915) in 23S rRNA. This chain is Ribosomal RNA large subunit methyltransferase H, found in Nitrosococcus oceani (strain ATCC 19707 / BCRC 17464 / JCM 30415 / NCIMB 11848 / C-107).